Consider the following 266-residue polypeptide: Protein crossbronx-like (266 aa).

A UBC core domain is found at 15–178; the sequence is KQGYHILAEY…VQEQAIASRN (164 aa).

It belongs to the ubiquitin-conjugating enzyme family. FTS subfamily.

The polypeptide is Protein crossbronx-like (Drosophila yakuba (Fruit fly)).